A 336-amino-acid chain; its full sequence is Acetyl-coenzyme A carboxylase carboxyl transferase subunit beta (336 aa).

One can recognise a CoA carboxyltransferase N-terminal domain in the interval 27-297; the sequence is LWTKCESCQG…VAPAPAPAAT (271 aa). Residues cysteine 31, cysteine 34, cysteine 50, and cysteine 53 each contribute to the Zn(2+) site. The segment at 31-53 adopts a C4-type zinc-finger fold; it reads CESCQGILYRPDLERNLEVCPKC. The tract at residues 287–336 is disordered; the sequence is SVAPAPAPAATVDPEPESAEPEAPAEEAGPAGAAGDQAGESQDEGDPRNA. The segment covering 300 to 311 has biased composition (acidic residues); sequence PEPESAEPEAPA. The span at 312–326 shows a compositional bias: low complexity; the sequence is EEAGPAGAAGDQAGE.

The protein belongs to the AccD/PCCB family. As to quaternary structure, acetyl-CoA carboxylase is a heterohexamer composed of biotin carboxyl carrier protein (AccB), biotin carboxylase (AccC) and two subunits each of ACCase subunit alpha (AccA) and ACCase subunit beta (AccD). The cofactor is Zn(2+).

It is found in the cytoplasm. It carries out the reaction N(6)-carboxybiotinyl-L-lysyl-[protein] + acetyl-CoA = N(6)-biotinyl-L-lysyl-[protein] + malonyl-CoA. The protein operates within lipid metabolism; malonyl-CoA biosynthesis; malonyl-CoA from acetyl-CoA: step 1/1. Functionally, component of the acetyl coenzyme A carboxylase (ACC) complex. Biotin carboxylase (BC) catalyzes the carboxylation of biotin on its carrier protein (BCCP) and then the CO(2) group is transferred by the transcarboxylase to acetyl-CoA to form malonyl-CoA. In Halorhodospira halophila (strain DSM 244 / SL1) (Ectothiorhodospira halophila (strain DSM 244 / SL1)), this protein is Acetyl-coenzyme A carboxylase carboxyl transferase subunit beta.